Reading from the N-terminus, the 549-residue chain is Hydroxylamine reductase (549 aa).

[4Fe-4S] cluster-binding residues include Cys-3, Cys-6, Cys-15, and Cys-21. Hybrid [4Fe-2O-2S] cluster-binding residues include His-248, Glu-272, Cys-316, Cys-403, Cys-431, Cys-456, Glu-490, and Lys-492. The residue at position 403 (Cys-403) is a Cysteine persulfide.

The protein belongs to the HCP family. [4Fe-4S] cluster serves as cofactor. It depends on hybrid [4Fe-2O-2S] cluster as a cofactor.

It localises to the cytoplasm. It catalyses the reaction A + NH4(+) + H2O = hydroxylamine + AH2 + H(+). Catalyzes the reduction of hydroxylamine to form NH(3) and H(2)O. In Rhodospirillum rubrum (strain ATCC 11170 / ATH 1.1.1 / DSM 467 / LMG 4362 / NCIMB 8255 / S1), this protein is Hydroxylamine reductase.